A 478-amino-acid polypeptide reads, in one-letter code: MEWETVIGLEIHAQLATKSKIFSGAATAYGAEPNRQACAVDLGMPGVLPVLNKGAVRMATKFGLAIGAKIAPRSVFARKNYFYPDLPKGYQISQYELPIVEGGELWIELEDGERKRIGVTRAHLEEDAGKSLHEDFHGMTGVDLNRAGTPLLEIVSEPDLRSAAEAAAYMKKLHALVRYLEICDGNMQEGSFRCDANVSVRPKGEEKFGTRAELKNLNSFRFVERAINYEVERQIALIESGGTVVQETRLYDADKGETRSMRTKEEANDYRYFPDPDLLPVELDPTFIEEVRETLPELPDEKRARFVEEYGLSDYDAGVLTATRELAEFYESVVTESGGFAKRSANWVQGDFLGALNKAGLELADSPVTPEMLGRLVARIEDETISGRVAKEVFEAMWNGEGEPDQIIEAKGLKQVTDTGAIEAMIDEVLAANPKQVEQYKGGKDKLLGFFVGQVMKASRGKANPGQVNELLKEKLDS.

This sequence belongs to the GatB/GatE family. GatB subfamily. In terms of assembly, heterotrimer of A, B and C subunits.

The catalysed reaction is L-glutamyl-tRNA(Gln) + L-glutamine + ATP + H2O = L-glutaminyl-tRNA(Gln) + L-glutamate + ADP + phosphate + H(+). The enzyme catalyses L-aspartyl-tRNA(Asn) + L-glutamine + ATP + H2O = L-asparaginyl-tRNA(Asn) + L-glutamate + ADP + phosphate + 2 H(+). Allows the formation of correctly charged Asn-tRNA(Asn) or Gln-tRNA(Gln) through the transamidation of misacylated Asp-tRNA(Asn) or Glu-tRNA(Gln) in organisms which lack either or both of asparaginyl-tRNA or glutaminyl-tRNA synthetases. The reaction takes place in the presence of glutamine and ATP through an activated phospho-Asp-tRNA(Asn) or phospho-Glu-tRNA(Gln). In Alkalilimnicola ehrlichii (strain ATCC BAA-1101 / DSM 17681 / MLHE-1), this protein is Aspartyl/glutamyl-tRNA(Asn/Gln) amidotransferase subunit B.